We begin with the raw amino-acid sequence, 106 residues long: Small ribosomal subunit protein bS18 (106 aa).

The interval 1 to 39 (MNGRNNDMGRNGGADYDDRDFGRTPDLNADAPGRRRTGR) is disordered.

It belongs to the bacterial ribosomal protein bS18 family. In terms of assembly, part of the 30S ribosomal subunit. Forms a tight heterodimer with protein bS6.

Its function is as follows. Binds as a heterodimer with protein bS6 to the central domain of the 16S rRNA, where it helps stabilize the platform of the 30S subunit. The protein is Small ribosomal subunit protein bS18 of Sorangium cellulosum (strain So ce56) (Polyangium cellulosum (strain So ce56)).